The sequence spans 138 residues: Transcription antitermination protein NusB (138 aa).

It belongs to the NusB family.

Functionally, involved in transcription antitermination. Required for transcription of ribosomal RNA (rRNA) genes. Binds specifically to the boxA antiterminator sequence of the ribosomal RNA (rrn) operons. This Alkaliphilus oremlandii (strain OhILAs) (Clostridium oremlandii (strain OhILAs)) protein is Transcription antitermination protein NusB.